We begin with the raw amino-acid sequence, 324 residues long: Bis(5'-nucleosyl)-tetraphosphatase, symmetrical (324 aa).

The disordered stretch occupies residues 269-324; the sequence is PGREVTAPATAPRAPRRPRERQGRQRARGGRGGGNGNGNGGNAAAPAAAPGDAPQE. A compositionally biased stretch (basic residues) spans 282-297; the sequence is APRRPRERQGRQRARG. A compositionally biased stretch (gly residues) spans 298 to 309; sequence GRGGGNGNGNGG. Residues 310-324 show a composition bias toward low complexity; it reads NAAAPAAAPGDAPQE.

This sequence belongs to the Ap4A hydrolase family.

The enzyme catalyses P(1),P(4)-bis(5'-adenosyl) tetraphosphate + H2O = 2 ADP + 2 H(+). Hydrolyzes diadenosine 5',5'''-P1,P4-tetraphosphate to yield ADP. The protein is Bis(5'-nucleosyl)-tetraphosphatase, symmetrical of Xanthomonas campestris pv. campestris (strain ATCC 33913 / DSM 3586 / NCPPB 528 / LMG 568 / P 25).